The primary structure comprises 183 residues: ATP synthase subunit b, chloroplastic (183 aa).

Residues 27–49 (LATNLINLTVVVGVLIYFGKGVL) traverse the membrane as a helical segment.

This sequence belongs to the ATPase B chain family. In terms of assembly, F-type ATPases have 2 components, F(1) - the catalytic core - and F(0) - the membrane proton channel. F(1) has five subunits: alpha(3), beta(3), gamma(1), delta(1), epsilon(1). F(0) has four main subunits: a(1), b(1), b'(1) and c(10-14). The alpha and beta chains form an alternating ring which encloses part of the gamma chain. F(1) is attached to F(0) by a central stalk formed by the gamma and epsilon chains, while a peripheral stalk is formed by the delta, b and b' chains.

Its subcellular location is the plastid. It localises to the chloroplast thylakoid membrane. In terms of biological role, f(1)F(0) ATP synthase produces ATP from ADP in the presence of a proton or sodium gradient. F-type ATPases consist of two structural domains, F(1) containing the extramembraneous catalytic core and F(0) containing the membrane proton channel, linked together by a central stalk and a peripheral stalk. During catalysis, ATP synthesis in the catalytic domain of F(1) is coupled via a rotary mechanism of the central stalk subunits to proton translocation. Component of the F(0) channel, it forms part of the peripheral stalk, linking F(1) to F(0). The chain is ATP synthase subunit b, chloroplastic from Oryza nivara (Indian wild rice).